We begin with the raw amino-acid sequence, 222 residues long: Beta-casein (222 aa).

The signal sequence occupies residues 1–15 (MKVLILACLVALALA). Residue Thr-27 is modified to Phosphothreonine. 4 positions are modified to phosphoserine: Ser-30, Ser-32, Ser-33, and Ser-34.

The protein belongs to the beta-casein family. In terms of tissue distribution, mammary gland specific. Secreted in milk.

It is found in the secreted. Its function is as follows. Important role in determination of the surface properties of the casein micelles. This chain is Beta-casein (CSN2), found in Ovis aries (Sheep).